Reading from the N-terminus, the 962-residue chain is Translation initiation factor IF-2 (962 aa).

The segment at 99–366 is disordered; that stretch reads VKAAQTQAAP…KKGKKLKLEP (268 aa). Residues 117–141 show a composition bias toward basic and acidic residues; it reads DAAKARAEAAARAEARAKAEAEAAK. Residues 145–155 show a composition bias toward low complexity; the sequence is AKAGNKAKPAA. Residues 173-216 show a composition bias toward basic and acidic residues; that stretch reads KPAEESKAEKAQADKMPSEKPAEPKEKAAKPKHERNGKGKDAKK. Positions 219 to 234 are enriched in low complexity; it reads KPAAPAVPQPVVSAEE. Over residues 235 to 269 the composition is skewed to basic and acidic residues; sequence QAQRDEEARRAAALRAHQEALLKEKQERQARREAM. A compositionally biased stretch (low complexity) spans 270-283; the sequence is KQQAEQQAKAAQEA. 2 stretches are compositionally biased toward basic and acidic residues: residues 314–327 and 338–354; these read AKKE…DEGQ and GGRD…ERVR. Residues 462–631 form the tr-type G domain; that stretch reads PRPPVVTVMG…LLEAEVLELT (170 aa). A G1 region spans residues 471–478; sequence GHVDHGKT. 471–478 contributes to the GTP binding site; the sequence is GHVDHGKT. The G2 stretch occupies residues 496–500; sequence GITQH. Residues 517-520 are G3; the sequence is DTPG. Residues 517–521 and 571–574 each bind GTP; these read DTPGH and NKID. The segment at 571–574 is G4; that stretch reads NKID. The G5 stretch occupies residues 607 to 609; the sequence is SAK.

The protein belongs to the TRAFAC class translation factor GTPase superfamily. Classic translation factor GTPase family. IF-2 subfamily.

The protein localises to the cytoplasm. One of the essential components for the initiation of protein synthesis. Protects formylmethionyl-tRNA from spontaneous hydrolysis and promotes its binding to the 30S ribosomal subunits. Also involved in the hydrolysis of GTP during the formation of the 70S ribosomal complex. This chain is Translation initiation factor IF-2, found in Neisseria meningitidis serogroup B (strain ATCC BAA-335 / MC58).